The sequence spans 432 residues: Trigger factor (432 aa).

Positions 162–247 (GDLVKFDYQG…VKEVQAPVLP (86 aa)) constitute a PPIase FKBP-type domain.

The protein belongs to the FKBP-type PPIase family. Tig subfamily.

It localises to the cytoplasm. It carries out the reaction [protein]-peptidylproline (omega=180) = [protein]-peptidylproline (omega=0). Its function is as follows. Involved in protein export. Acts as a chaperone by maintaining the newly synthesized protein in an open conformation. Functions as a peptidyl-prolyl cis-trans isomerase. The sequence is that of Trigger factor from Thiobacillus denitrificans (strain ATCC 25259 / T1).